Here is a 188-residue protein sequence, read N- to C-terminus: NANOG neighbor homeobox (188 aa).

Residues 28-106 (ETILANKKQS…NEKQKQYPEK (79 aa)) are disordered. Positions 57–106 (QNGKQKWREEGEAGRKREREKEEKNEKELQDEQENKRKRENEKQKQYPEK) are enriched in basic and acidic residues. The segment at residues 102–161 (QYPEKRLVSKSLMHTLWAKFKLNRCPTIQESLSLSFEFDMTHKQISQWFCKTRKKYNKEM) is a DNA-binding region (homeobox).

The protein localises to the nucleus. The polypeptide is NANOG neighbor homeobox (NANOGNB) (Homo sapiens (Human)).